We begin with the raw amino-acid sequence, 450 residues long: Sorting nexin-4 (450 aa).

M1 carries the N-acetylmethionine modification. The tract at residues 1 to 46 (MEQAPPDPERQLQPAPLEPLGSPDAGLGAAVGKEAEGAGEESSGVD) is disordered. Position 22 is a phosphoserine (S22). Residues 61–187 (SVSEAEKRTG…YLFLTQEGNW (127 aa)) enclose the PX domain. 4 residues coordinate a 1,2-diacyl-sn-glycero-3-phospho-(1D-myo-inositol-3-phosphate): R106, S108, K132, and R154.

Belongs to the sorting nexin family. As to quaternary structure, heterodimer; heterodimerizes with SNX7 or SNX30. Interacts with WWC1/KIBRA. Identified in a complex with WWC1/KIBRA and dynein components DYNLL1 and DYNC1I2. Interacts with BIN1.

The protein localises to the early endosome membrane. Its function is as follows. Involved in the regulation of endocytosis and in several stages of intracellular trafficking. Plays a role in recycling endocytosed transferrin receptor and prevent its degradation. Involved in autophagosome assembly by regulating trafficking and recycling of phospholipid scramblase ATG9A. The protein is Sorting nexin-4 of Homo sapiens (Human).